The sequence spans 365 residues: MNLAAMDPNTYDAQLEEKRIKLEQIFTDFDTPKLEVFSSEPAHYRMRAEFRIWHDGEDMYYYMFDKALDSKVRCDQFLPASELINKVMPALMEELRPNPTLRHRLFQIDFLSTLSGEILVSLLYHKQLDAQWEIEAKALKEKLAATFNINIIGRARKQKLIIDKDFVIESLTVNNEQLQYHQIENSFTQPNGKVSVKMLEWAIDVTKNSQGDLLELYCGNGNFSIALAQNFDRVLATELAKPSVESAQYNIKINKIDNLQIIRMSAEDFTDAMAKKRTFRRLEGIDLDSYNCNTIFVDPPRAGMDPDTVKLVQGYDRIVYISCNPNTLIDNLAELSKTHKITRFALFDQFPYTDHMESGVFLERR.

5 residues coordinate S-adenosyl-L-methionine: Q189, Y217, N222, E238, and D298. Residue C323 is the Nucleophile of the active site. Residue E357 is the Proton acceptor of the active site.

It belongs to the class I-like SAM-binding methyltransferase superfamily. RNA M5U methyltransferase family. TrmA subfamily.

The catalysed reaction is uridine(54) in tRNA + S-adenosyl-L-methionine = 5-methyluridine(54) in tRNA + S-adenosyl-L-homocysteine + H(+). It carries out the reaction uridine(341) in tmRNA + S-adenosyl-L-methionine = 5-methyluridine(341) in tmRNA + S-adenosyl-L-homocysteine + H(+). Functionally, dual-specificity methyltransferase that catalyzes the formation of 5-methyluridine at position 54 (m5U54) in all tRNAs, and that of position 341 (m5U341) in tmRNA (transfer-mRNA). This Shewanella sediminis (strain HAW-EB3) protein is tRNA/tmRNA (uracil-C(5))-methyltransferase.